The chain runs to 301 residues: m7GpppX diphosphatase (301 aa).

Substrate contacts are provided by residues E154, K176, and 237–248; that span reads HYQPSFYHLHVH. The Histidine triad motif motif lies at 244–248; sequence HLHVH. H246 acts as the Nucleophile in catalysis.

Belongs to the HIT family.

The protein resides in the nucleus. It catalyses the reaction a 5'-end (N(7)-methyl 5'-triphosphoguanosine)-ribonucleoside in mRNA + H2O = N(7)-methyl-GMP + a 5'-end diphospho-ribonucleoside in mRNA + 2 H(+). The enzyme catalyses a 5'-end (N(2),N(2),N(7)-trimethyl 5'-triphosphoguanosine)-ribonucleoside in mRNA + H2O = (N(2),N(2),N(7))-trimethyl-GMP + a 5'-end diphospho-ribonucleoside in mRNA + 2 H(+). With respect to regulation, the hydrolytic product 7-methylguanosine diphosphate (m7GDP) efficiently inhibits the decapping scavenger activity and acts as a competitive inhibitor in vitro. Functionally, decapping scavenger enzyme that catalyzes the cleavage of a residual cap structure following the degradation of mRNAs of the 3'-&gt;5' exosome-mediated mRNA decay pathway. Hydrolyzes cap analog structures like 7-methylguanosine nucleoside triphosphate (m7GpppG) and tri-methyl guanosine nucleoside triphosphate (m3(2,2,7)GpppG) with up to 2 nucleotide substrates (small capped oligoribonucleotides) and specifically releases 5'-phosphorylated RNA fragments and 7-methylguanosine monophosphate (m7GMP). Does not hydrolyze unmethylated cap analog (GpppG) and shows no decapping activity on intact m7GpppG-capped mRNA molecules. Does not hydrolyze 7-methylguanosine diphosphate (m7GDP) and tri-methylguanosine diphosphate (m3(2,2,7)GDP) to m(7)GMP and m3(2,2,7)GMP, respectively. May also play a role in the 5'-&gt;3 mRNA decay pathway; m7GDP, the downstream product released by the 5'-&gt;3' mRNA mediated decapping activity, may be also converted by dcs-1 to m7GMP. Binds to m7GpppG and strongly to m7GDP. This is m7GpppX diphosphatase from Ascaris suum (Pig roundworm).